The chain runs to 454 residues: tRNA modification GTPase MnmE (454 aa).

The (6S)-5-formyl-5,6,7,8-tetrahydrofolate site is built by Arg23, Glu80, and Lys120. One can recognise a TrmE-type G domain in the interval 216–377 (GMKVVIAGRP…LRNHLKQSMG (162 aa)). Residue Asn226 participates in K(+) binding. Residues 226-231 (NAGKSS), 245-251 (TDIAGTT), 270-273 (DTAG), 335-338 (NKAD), and 358-360 (SAR) contribute to the GTP site. Ser230 is a binding site for Mg(2+). The K(+) site is built by Thr245, Ile247, and Thr250. Thr251 provides a ligand contact to Mg(2+). Lys454 contributes to the (6S)-5-formyl-5,6,7,8-tetrahydrofolate binding site.

Belongs to the TRAFAC class TrmE-Era-EngA-EngB-Septin-like GTPase superfamily. TrmE GTPase family. In terms of assembly, homodimer. Heterotetramer of two MnmE and two MnmG subunits. Requires K(+) as cofactor.

It is found in the cytoplasm. In terms of biological role, exhibits a very high intrinsic GTPase hydrolysis rate. Involved in the addition of a carboxymethylaminomethyl (cmnm) group at the wobble position (U34) of certain tRNAs, forming tRNA-cmnm(5)s(2)U34. This is tRNA modification GTPase MnmE from Shigella boydii serotype 18 (strain CDC 3083-94 / BS512).